The sequence spans 449 residues: C4-dicarboxylate transport protein (449 aa).

A run of 8 helical transmembrane segments spans residues 18-38 (PFYL…ALLG), 61-81 (MIIS…VAHV), 93-113 (VYFL…AHVV), 159-179 (FVGD…IALA), 202-222 (LVQM…AFTI), 244-264 (SLLF…FSIL), 346-366 (LFLV…AGFI), and 369-389 (AATL…ILGV).

Belongs to the dicarboxylate/amino acid:cation symporter (DAACS) (TC 2.A.23) family.

The protein resides in the cell inner membrane. In terms of biological role, responsible for the transport of dicarboxylates such as succinate, fumarate, and malate from the periplasm across the membrane. The polypeptide is C4-dicarboxylate transport protein (Xylella fastidiosa (strain M23)).